The chain runs to 276 residues: Bis(5'-nucleosyl)-tetraphosphatase, symmetrical (276 aa).

This sequence belongs to the Ap4A hydrolase family.

It carries out the reaction P(1),P(4)-bis(5'-adenosyl) tetraphosphate + H2O = 2 ADP + 2 H(+). Functionally, hydrolyzes diadenosine 5',5'''-P1,P4-tetraphosphate to yield ADP. The protein is Bis(5'-nucleosyl)-tetraphosphatase, symmetrical of Legionella pneumophila (strain Lens).